The chain runs to 239 residues: Ribosomal RNA small subunit methyltransferase G (239 aa).

Residues G78, F83, 129–130 (AE), and R148 each bind S-adenosyl-L-methionine.

It belongs to the methyltransferase superfamily. RNA methyltransferase RsmG family.

It localises to the cytoplasm. Functionally, specifically methylates the N7 position of a guanine in 16S rRNA. The polypeptide is Ribosomal RNA small subunit methyltransferase G (Clostridium botulinum (strain Alaska E43 / Type E3)).